The primary structure comprises 264 residues: Agamous-like MADS-box protein AGL61 (264 aa).

The MADS-box domain occupies 62-122 (IGRQKIPMVK…KKPFSFGHPS (61 aa)).

As to quaternary structure, interacts with PHE1/AGL37, PHE2/AGL38, AGL80 and AGL86. Forms a heterodimer with AGL80. In terms of tissue distribution, expressed exclusively in the central cell of the female gametophyte and in early endosperm.

It is found in the nucleus. Probable transcription factor. Controls central cell differentiation during female gametophyte development. The chain is Agamous-like MADS-box protein AGL61 (AGL61) from Arabidopsis thaliana (Mouse-ear cress).